A 607-amino-acid polypeptide reads, in one-letter code: CUB and zona pellucida-like domain-containing protein 1 (607 aa).

Residues 1–19 (MEVTGRLFIWAILAVSCGA) form the signal peptide. C17 and C58 form a disulfide bridge. 2 CUB domains span residues 20 to 146 (QLNS…YFFS) and 154 to 265 (CGGD…YTSI). Residues 20 to 568 (QLNSTEAEGK…AEISNQPLSR (549 aa)) lie on the Lumenal side of the membrane. N-linked (GlcNAc...) asparagine glycans are attached at residues N22, N57, and N67. Intrachain disulfides connect C85–C107, C154–C180, and C207–C229. The ZP domain maps to 276–519 (SCVSDKMRVI…SRCNQGCVPR (244 aa)). An N-linked (GlcNAc...) asparagine glycan is attached at N419. The cysteines at positions 442 and 498 are disulfide-linked. The chain crosses the membrane as a helical span at residues 569–589 (LYLFSFMVLALNVVIVAITTV). Topologically, residues 590-607 (KHFLNRWMDHRYQKLQVY) are cytoplasmic.

In terms of tissue distribution, highly expressed in pancreatic acinar cells. Also expressed in epithelium of the uterus during late pregnancy but not detected in non-pregnant uterus or in a variety of other adult and fetal tissues.

The protein resides in the zymogen granule membrane. Localized to zymogen granules, where it functions in trypsinogen activation. May indirectly regulate cell motility, cell-cell and cell/extracellular matrix interactions. The sequence is that of CUB and zona pellucida-like domain-containing protein 1 from Mus musculus (Mouse).